The sequence spans 441 residues: Glutamate-1-semialdehyde 2,1-aminomutase (441 aa).

The residue at position 275 (Lys275) is an N6-(pyridoxal phosphate)lysine.

This sequence belongs to the class-III pyridoxal-phosphate-dependent aminotransferase family. HemL subfamily. In terms of assembly, homodimer. Pyridoxal 5'-phosphate serves as cofactor.

It localises to the cytoplasm. It catalyses the reaction (S)-4-amino-5-oxopentanoate = 5-aminolevulinate. The protein operates within porphyrin-containing compound metabolism; protoporphyrin-IX biosynthesis; 5-aminolevulinate from L-glutamyl-tRNA(Glu): step 2/2. The chain is Glutamate-1-semialdehyde 2,1-aminomutase from Deinococcus deserti (strain DSM 17065 / CIP 109153 / LMG 22923 / VCD115).